Reading from the N-terminus, the 108-residue chain is Peptidyl-prolyl cis-trans isomerase FKBP1A (108 aa).

Position 10 is a phosphoserine (Ser10). The region spanning 20–108 is the PPIase FKBP-type domain; that stretch reads GQTCVVHYTG…VFDVELLKLE (89 aa). An N6-acetyllysine; alternate modification is found at Lys53. An N6-succinyllysine; alternate modification is found at Lys53.

This sequence belongs to the FKBP-type PPIase family. FKBP1 subfamily. Interacts with TGFBR1; prevents TGFBR1 phosphorylation by TGFBR2 and stabilizes it in the inactive conformation. Interacts with ACVR1B and SMAD7. Identified in a complex composed of RYR1, PDE4D, PKA, FKBP1A and protein phosphatase 1 (PP1). Interacts directly with RYR2. Interacts directly with RYR3. Interacts directly with RYR1. Interacts with GLMN; rapamycin and FK506 abolish the interaction with GLMN in a dose dependent manner. In terms of tissue distribution, ubiquitous.

It localises to the cytoplasm. The protein resides in the cytosol. Its subcellular location is the sarcoplasmic reticulum membrane. It carries out the reaction [protein]-peptidylproline (omega=180) = [protein]-peptidylproline (omega=0). With respect to regulation, inhibited by both FK506 and rapamycin. Its function is as follows. Keeps in an inactive conformation TGFBR1, the TGF-beta type I serine/threonine kinase receptor, preventing TGF-beta receptor activation in absence of ligand. Recruits SMAD7 to ACVR1B which prevents the association of SMAD2 and SMAD3 with the activin receptor complex, thereby blocking the activin signal. May modulate the RYR1 calcium channel activity. PPIases accelerate the folding of proteins. It catalyzes the cis-trans isomerization of proline imidic peptide bonds in oligopeptides. The protein is Peptidyl-prolyl cis-trans isomerase FKBP1A (Fkbp1a) of Rattus norvegicus (Rat).